The following is a 1785-amino-acid chain: Brefeldin A-inhibited guanine nucleotide-exchange protein 2 (1785 aa).

Met1 is subject to N-acetylmethionine. The segment at 2–224 (QESQTKSMFV…KPQSPVIQAA (223 aa)) is DCB; DCB:DCB domain and DCB:HUS domain interaction. Residues Ser214, Ser218, and Ser227 each carry the phosphoserine modification. A disordered region spans residues 232–285 (RLKHSQAQSKPTTPEKTDLTNGEHARSDSGKVSTENGDAPRERGSSLSGTDDGA). Phosphothreonine is present on Thr244. Over residues 244 to 260 (TPEKTDLTNGEHARSDS) the composition is skewed to basic and acidic residues. Residues Ser277, Ser348, and Ser349 each carry the phosphoserine modification. The interval 508 to 528 (ADAQCVVDIYVNYDCDLNAAN) is HUS; DCB:HUS domain interaction. Ser614 bears the Phosphoserine mark. Position 616 is a phosphothreonine (Thr616). A Phosphoserine modification is found at Ser617. Position 626 is a phosphothreonine (Thr626). The SEC7 domain occupies 654–785 (FNKKPKRGIQ…IIMLTTDLHS (132 aa)). Phosphoserine is present on residues Ser700, Ser1511, Ser1513, Ser1514, Ser1525, Ser1528, Ser1534, and Ser1782. Polar residues predominate over residues 1514 to 1532 (SIDKNPSERGQSQLSNPTD). Residues 1514–1535 (SIDKNPSERGQSQLSNPTDDSW) are disordered.

Homodimer. Interacts with ARFGEF1/BIG1; both proteins are probably part of the same or very similar macromolecular complexes. Interacts with PRKAR1A, PRKAR2A, PRKAR1B, PRKAR2B, PPP1CC, PDE3A, TNFRSF1A, MYCBP and EXOC7. Interacts with GABRB1, GABRB2 and GABRB3. In vitro phosphorylated by PKA reducing its GEF activity and dephosphorylated by phosphatase PP1. In terms of tissue distribution, expressed in placenta, lung, heart, brain, kidney and pancreas.

The protein resides in the cytoplasm. It is found in the membrane. The protein localises to the golgi apparatus. It localises to the perinuclear region. Its subcellular location is the trans-Golgi network. The protein resides in the endosome. It is found in the cytoskeleton. The protein localises to the microtubule organizing center. It localises to the centrosome. Its subcellular location is the cell projection. The protein resides in the dendrite. It is found in the cytoplasmic vesicle. The protein localises to the synapse. Inhibited by brefeldin A. Functionally, promotes guanine-nucleotide exchange on ARF1 and ARF3 and to a lower extent on ARF5 and ARF6. Promotes the activation of ARF1/ARF5/ARF6 through replacement of GDP with GTP. Involved in the regulation of Golgi vesicular transport. Required for the integrity of the endosomal compartment. Involved in trafficking from the trans-Golgi network (TGN) to endosomes and is required for membrane association of the AP-1 complex and GGA1. Seems to be involved in recycling of the transferrin receptor from recycling endosomes to the plasma membrane. Probably is involved in the exit of GABA(A) receptors from the endoplasmic reticulum. Involved in constitutive release of tumor necrosis factor receptor 1 via exosome-like vesicles; the function seems to involve PKA and specifically PRKAR2B. Proposed to act as A kinase-anchoring protein (AKAP) and may mediate crosstalk between Arf and PKA pathways. This Homo sapiens (Human) protein is Brefeldin A-inhibited guanine nucleotide-exchange protein 2 (ARFGEF2).